Consider the following 601-residue polypeptide: DNA ligase (601 aa).

Asp258 provides a ligand contact to ATP. Residue Lys260 is the N6-AMP-lysine intermediate of the active site. Residues Arg265, Arg280, Glu310, Phe350, Arg427, and Lys433 each coordinate ATP.

This sequence belongs to the ATP-dependent DNA ligase family. Interacts with the PCNA heterotrimer, probably via subunit PCNA3. The cofactor is a divalent metal cation.

The enzyme catalyses ATP + (deoxyribonucleotide)n-3'-hydroxyl + 5'-phospho-(deoxyribonucleotide)m = (deoxyribonucleotide)n+m + AMP + diphosphate.. Ligase activity stimulated by PCNA heterotrimer. In terms of biological role, DNA ligase that seals nicks in double-stranded DNA during DNA replication, DNA recombination and DNA repair. Interaction with PCNA enhances ligase activity. DNA polymerase I, DNA ligase and the flap endonuclease may be constitutively associated with the PCNA heterotrimer forming a scanning complex able to couple DNA synthesis and Okazaki fragment maturation. This is DNA ligase from Saccharolobus solfataricus (strain ATCC 35092 / DSM 1617 / JCM 11322 / P2) (Sulfolobus solfataricus).